The chain runs to 334 residues: Fructose-1,6-bisphosphatase class 1 (334 aa).

4 residues coordinate Mg(2+): glutamate 92, aspartate 114, leucine 116, and aspartate 117. Substrate-binding positions include 117–120 (DGSS) and asparagine 209. Glutamate 281 provides a ligand contact to Mg(2+).

The protein belongs to the FBPase class 1 family. Homotetramer. The cofactor is Mg(2+).

It localises to the cytoplasm. It catalyses the reaction beta-D-fructose 1,6-bisphosphate + H2O = beta-D-fructose 6-phosphate + phosphate. The protein operates within carbohydrate biosynthesis; gluconeogenesis. This is Fructose-1,6-bisphosphatase class 1 from Nitrosomonas europaea (strain ATCC 19718 / CIP 103999 / KCTC 2705 / NBRC 14298).